A 148-amino-acid chain; its full sequence is 1,4-dihydroxy-2-naphthoyl-CoA hydrolase (148 aa).

Residue Asp15 is part of the active site.

Belongs to the 4-hydroxybenzoyl-CoA thioesterase family. DHNA-CoA hydrolase subfamily.

The enzyme catalyses 1,4-dihydroxy-2-naphthoyl-CoA + H2O = 1,4-dihydroxy-2-naphthoate + CoA + H(+). It participates in cofactor biosynthesis; phylloquinone biosynthesis. The protein operates within quinol/quinone metabolism; 1,4-dihydroxy-2-naphthoate biosynthesis; 1,4-dihydroxy-2-naphthoate from chorismate: step 7/7. In terms of biological role, catalyzes the hydrolysis of 1,4-dihydroxy-2-naphthoyl-CoA (DHNA-CoA) to 1,4-dihydroxy-2-naphthoate (DHNA), a reaction involved in phylloquinone (vitamin K1) biosynthesis. In Nostoc punctiforme (strain ATCC 29133 / PCC 73102), this protein is 1,4-dihydroxy-2-naphthoyl-CoA hydrolase.